The following is a 513-amino-acid chain: Xylose import ATP-binding protein XylG (513 aa).

2 ABC transporter domains span residues 5–242 (LEMK…VGRE) and 259–505 (LRIE…LRSE). 37-44 (GENGSGKS) is a binding site for ATP.

The protein belongs to the ABC transporter superfamily. Xylose importer (TC 3.A.1.2.4) family. As to quaternary structure, the complex is composed of two ATP-binding proteins (XylG), two transmembrane proteins (XylH) and a solute-binding protein (XylF).

It localises to the cell inner membrane. The enzyme catalyses D-xylose(out) + ATP + H2O = D-xylose(in) + ADP + phosphate + H(+). Its function is as follows. Part of the ABC transporter complex XylFGH involved in xylose import. Responsible for energy coupling to the transport system. The sequence is that of Xylose import ATP-binding protein XylG from Escherichia coli (strain UTI89 / UPEC).